The following is a 207-amino-acid chain: MARYIGPKAKLSRREGTDLFLKSARRSLADKCKLDSKPGQHGRTSGARTSDYGTQLREKQKVKRIYGVLERQFRRYFAEADRRKGNTGENLLQLLESRLDNVVYRMGFGSTRAEARQLVSHKSITVNGVVANVPSQQVKAGDVIAIREKAKKQARIIEALSLAEQGGMPSWVAVDAKKFEGTFKQMPERADIAGDINESLIVELYSR.

The tract at residues 31-55 (KCKLDSKPGQHGRTSGARTSDYGTQ) is disordered. Positions 42-53 (GRTSGARTSDYG) are enriched in polar residues. The S4 RNA-binding domain maps to 97–160 (SRLDNVVYRM…KKQARIIEAL (64 aa)).

This sequence belongs to the universal ribosomal protein uS4 family. As to quaternary structure, part of the 30S ribosomal subunit. Contacts protein S5. The interaction surface between S4 and S5 is involved in control of translational fidelity.

Functionally, one of the primary rRNA binding proteins, it binds directly to 16S rRNA where it nucleates assembly of the body of the 30S subunit. With S5 and S12 plays an important role in translational accuracy. In Burkholderia vietnamiensis (strain G4 / LMG 22486) (Burkholderia cepacia (strain R1808)), this protein is Small ribosomal subunit protein uS4.